A 3420-amino-acid chain; its full sequence is Adhesin BmaC autotransporter (3420 aa).

The N-terminal stretch at 1 to 72 (MPNLANQDFT…SLVMAGTAAA (72 aa)) is a signal peptide. One can recognise an Autotransporter domain in the interval 3138 to 3420 (GPSGNNGIWA…AGSVGLRVRW (283 aa)).

Its subcellular location is the cell surface. It localises to the cell outer membrane. In terms of biological role, fibronectin-binding protein, which is involved in adhesion to host cells and in the infective process. Mediates the binding of B.suis to the extracellular matrix and to non-phagocytic cells via cell-associated fibronectin. The chain is Adhesin BmaC autotransporter from Brucella suis biovar 1 (strain 1330).